The chain runs to 561 residues: Asparagine synthetase [glutamine-hydrolyzing] (561 aa).

The For GATase activity role is filled by C2. One can recognise a Glutamine amidotransferase type-2 domain in the interval 2–191; the sequence is CGIWALFGSD…PGHYEVLDLK (190 aa). L-glutamine is bound by residues 49-53, 75-77, and D97; these read RLAVV and NGE. One can recognise an Asparagine synthetase domain in the interval 213–536; the sequence is HALYDSVEKL…PGRADWLTHY (324 aa). Residues L256, I288, and 363–364 each bind ATP; that span reads SG. K385 is modified (N6-acetyllysine). A Phosphothreonine modification is found at T545. S557 bears the Phosphoserine mark.

It catalyses the reaction L-aspartate + L-glutamine + ATP + H2O = L-asparagine + L-glutamate + AMP + diphosphate + H(+). Its pathway is amino-acid biosynthesis; L-asparagine biosynthesis; L-asparagine from L-aspartate (L-Gln route): step 1/1. This is Asparagine synthetase [glutamine-hydrolyzing] (ASNS) from Mesocricetus auratus (Golden hamster).